The sequence spans 139 residues: Unique cartilage matrix-associated protein (139 aa).

The signal sequence occupies residues 1-26 (MNWNQIIFISLIATVLILAIANEAES). The propeptide at 27–65 (AAVRTDKSDIKREDGENMKKRIFMQESEATAFLKRRGRR) is ucma-N. Positions 60–117 (KRRGRRSTKSKDEVNAENRQRLAADERRREYYEEQRNEFENYVEEERDEQQERNREKT) are disordered. Over residues 68–98 (KSKDEVNAENRQRLAADERRREYYEEQRNEF) the composition is skewed to basic and acidic residues. Positions 70-123 (KDEVNAENRQRLAADERRREYYEEQRNEFENYVEEERDEQQERNREKTEQWREY) form a coiled coil. 4-carboxyglutamate occurs at positions 72, 76, 85, 89, 92, 93, 97, 99, 103, 104, 105, 108, 111, 115, 118, and 122.

It belongs to the UCMA family. Proteolytically cleaved by a furin-like convertase to generate a persistent C-terminal fragment found in almost the entire cartilage matrix, and affecting osteoblast differentiation. Post-translationally, sulfated on tyrosine residues. Detected in all tissues tested: heart, liver, kidney, muscle, gonads, brain, ganoid plate, anterior kidney, spleen, spine, cleithrum, head plate, operculum, skull, mandibula, branchial arches, anterior vertebra, and posterior vertebra. Expression is highest in the cartilaginous tissues (skull, mandibula, branchial arches, anterior vertebra and posterior vertebra), with the highest levels found in posterior vertebra. Found in mature and immature chondrocytes within the vertebra and mandibula, and in the chordoblast layer of the notochord in vertebra.

It localises to the secreted. The protein resides in the extracellular space. It is found in the extracellular matrix. May be involved in the negative control of osteogenic differentiation of osteochondrogenic precursor cells in peripheral zones of fetal cartilage and at the cartilage-bone interface. This is Unique cartilage matrix-associated protein (ucma) from Acipenser naccarii (Adriatic sturgeon).